The following is a 662-amino-acid chain: Protein distal antenna (662 aa).

The 52-residue stretch at 21–72 (TKGKRPLRHLTATDKIDAIQRIHDGESKASVARDIGVPESTLRGWCKNEEKL) folds into the HTH psq-type domain. The H-T-H motif DNA-binding region spans 48 to 68 (KASVARDIGVPESTLRGWCKN). Disordered regions lie at residues 265 to 299 (RNAR…STPS), 348 to 407 (YSQM…PEDT), 491 to 537 (PEDL…DDEV), and 558 to 596 (QSSP…KSTC). The segment covering 349–391 (SQMPRPSSPQQPQSTPPTTTTTQQQQPQSSTPPTATPPIVSTP) has biased composition (low complexity). Residues 511–520 (FNPSPSTSIK) show a composition bias toward polar residues. The span at 527–536 (VDEDEDEDDE) shows a compositional bias: acidic residues.

In terms of assembly, homomers. Interacts with itself, danr, ey and dac to form a complex (or complexes) containing the RD factors.

It localises to the nucleus. Probable transcription factor with a role in the retinal determination (RD) network. Contributes to differentiation of antenna-specific characteristics. This is Protein distal antenna from Culex quinquefasciatus (Southern house mosquito).